Reading from the N-terminus, the 403-residue chain is Ribose-phosphate pyrophosphokinase 1, chloroplastic (403 aa).

The transit peptide at Met-1–Lys-49 directs the protein to the chloroplast. Mg(2+) contacts are provided by Asp-217, His-219, Asp-228, and Asp-232. The tract at residues Gly-303–Thr-318 is binding of phosphoribosylpyrophosphate.

It belongs to the ribose-phosphate pyrophosphokinase family. It depends on Mg(2+) as a cofactor.

It is found in the plastid. It localises to the chloroplast. The catalysed reaction is D-ribose 5-phosphate + ATP = 5-phospho-alpha-D-ribose 1-diphosphate + AMP + H(+). The chain is Ribose-phosphate pyrophosphokinase 1, chloroplastic (PRS1) from Arabidopsis thaliana (Mouse-ear cress).